Reading from the N-terminus, the 571-residue chain is uncharacterized protein (571 aa).

Helical transmembrane passes span 10-29 (VRLH…HFIG), 36-55 (VSLG…GLLF), 65-87 (WAFF…FASL), 96-118 (ALAV…LFRF), and 166-188 (ATTY…PRLL). An RCK C-terminal domain is found at 294–378 (TEVDDQELLS…IATAARNLGF (85 aa)). Transmembrane regions (helical) follow at residues 388–406 (LVYL…LLQV), 411–433 (VPLG…WLYS), 446–465 (LRLL…GLAA), 480–502 (LFAK…GLLL), 509–531 (LPPI…LNAL), and 546–568 (VPFA…CAVA).

It belongs to the AAE transporter (TC 2.A.81) family.

Its subcellular location is the cell membrane. This is an uncharacterized protein from Bordetella bronchiseptica (strain ATCC BAA-588 / NCTC 13252 / RB50) (Alcaligenes bronchisepticus).